Here is a 324-residue protein sequence, read N- to C-terminus: tRNA pseudouridine synthase B (324 aa).

Residue H43 participates in substrate binding. The Nucleophile role is filled by D48. Y76, Y179, and L200 together coordinate substrate.

The protein belongs to the pseudouridine synthase TruB family. Type 1 subfamily.

The catalysed reaction is uridine(55) in tRNA = pseudouridine(55) in tRNA. Responsible for synthesis of pseudouridine from uracil-55 in the psi GC loop of transfer RNAs. The polypeptide is tRNA pseudouridine synthase B (Yersinia pestis bv. Antiqua (strain Nepal516)).